The sequence spans 711 residues: MFNETKKSIEWGEETLTLETGKVARQADGSVIATLGETSVMANVTFAKKQKPGQDFFPLTVHYQEKYYAAGKVPGGFFKREARPTEKETLTARLIDRPLRPLFVPGFKNEVLVMCTVLSHDLVNDPDMVAMIAASAALTISGAPFMGPIAGARVGFEDGEYILNPTVDDMQDLRLNPEQRLDLVVAGTKDAVMMVESEAYELSEAEMLGAVKFAHDAIQPVLDLIIDLAEDCAKEPFDFSPPDYSELSAAVKAAGETEMRAAFAISDKQERTTAVAAARETIMAALSDEQKEDPNLGSAMKGLEASILRGDVVKTGKRIDGRKTDEIRDIVCETGLLPRTHGSALFTRGETQGLVVTTLGTGDDEQFIDALHGNFKSNFLLHYNFPPYSVGEAGRVGPPGRREIGHGKLAWRALQAVLPAATDFPYTVRVVSEITESNGSSSMASVCGGSLSMMDAGVPLKAPVAGVAMGLILEEDGSYAILSDILGDEDHLGDMDFKVAGTEAGITSLQMDIKIAGITPEIMEKALEQAKAGRIHILGEMAKSITGAQDFSIHAPRIETMQIPTDKIREVIGSGGKVIREIVEVSGAKVDINDEGIIKIASPNGEAIKKAYDMIHSIVAEPEEGMVYTGTVVKIVDFGAFVNFFGKRDGLVHVSQIENRRLNHPSDVLKEGQEVKVKLLGFDDRGKVRLSMKVVDQETGEEIKKEEAPAD.

Mg(2+)-binding residues include Asp-490 and Asp-496. In terms of domain architecture, KH spans 556-615 (PRIETMQIPTDKIREVIGSGGKVIREIVEVSGAKVDINDEGIIKIASPNGEAIKKAYDMI). Residues 625–693 (GMVYTGTVVK…DRGKVRLSMK (69 aa)) form the S1 motif domain.

It belongs to the polyribonucleotide nucleotidyltransferase family. Mg(2+) is required as a cofactor.

The protein resides in the cytoplasm. The enzyme catalyses RNA(n+1) + phosphate = RNA(n) + a ribonucleoside 5'-diphosphate. Functionally, involved in mRNA degradation. Catalyzes the phosphorolysis of single-stranded polyribonucleotides processively in the 3'- to 5'-direction. This Roseobacter denitrificans (strain ATCC 33942 / OCh 114) (Erythrobacter sp. (strain OCh 114)) protein is Polyribonucleotide nucleotidyltransferase.